The sequence spans 125 residues: UPF0102 protein PA4424 (125 aa).

The protein belongs to the UPF0102 family.

This Pseudomonas aeruginosa (strain ATCC 15692 / DSM 22644 / CIP 104116 / JCM 14847 / LMG 12228 / 1C / PRS 101 / PAO1) protein is UPF0102 protein PA4424.